The primary structure comprises 573 residues: DNA ligase (573 aa).

Residue glutamate 250 participates in ATP binding. Residue lysine 252 is the N6-AMP-lysine intermediate of the active site. The ATP site is built by arginine 257, arginine 272, glutamate 301, phenylalanine 342, arginine 432, and lysine 438.

Belongs to the ATP-dependent DNA ligase family. Mg(2+) is required as a cofactor.

The enzyme catalyses ATP + (deoxyribonucleotide)n-3'-hydroxyl + 5'-phospho-(deoxyribonucleotide)m = (deoxyribonucleotide)n+m + AMP + diphosphate.. Its function is as follows. DNA ligase that seals nicks in double-stranded DNA during DNA replication, DNA recombination and DNA repair. This Methanococcus maripaludis (strain C7 / ATCC BAA-1331) protein is DNA ligase.